Reading from the N-terminus, the 944-residue chain is MAAVAAVAARRRRSWTGLVLACLGVCLGLTLAVDRSNFKTCEESSFCKRQRSIRPGQSPYRALLDSLQLGPDTLTIHLINEVTKVLLVLELQGLQKNMTRIRIDELEPRRPRYRVPDVLVAEPPTARLSVSGQDDNSVEVTVAEGPYKIILTARPFRLDLLEDRSLLLSVNARGLLNFEHQRAPRVSQGSKDPAEGDGAQPEEAPGDGDKPEEIQGKAEKDEPGAWEETFKTHSDSKPYGPTSVGLDFSLPGMEHVYGIPEHADSLRLKVTEGGDPYRLYNLDVFQYELYNPMALYGSVPVLLAHSPHRDLGIFWLNAAETWVDISSNTAGKTLFGKMLDYLQGSGETPQTDVRWMSESGIIDVFLLLGPSVFDVFRQYASLTGTQALPPLFSLGYHQSRWNYRDEADVLEVNQGFDDHNLPCDFIWLDIEHADGKRYFTWDPSRFPQPRTMLEHLASKRRKLVAIVDPHIKVDSSYRVHEELQNLGLYVKTRDGSDYEGWCWPGAASYPDFTNPKMRAWWADMFRFENYEGSSSNLYVWNDMNEPSVFNGPEVTMLKDAQHYGGWEHRDLHNIYGFYVHMATADGLVLRSGGVERPFVLSRAFFAGSQRFGAVWTGDNTAEWDHLKISIPMCLSLGLVGVSFCGADVGGFFKNPEPELLVRWYQMGAYQPFFRAHAHLDTGRREPWLLPTQYQDMIRDALGQRYSLLPFWYTLFYQAHREGVPVMRALWVHYPQDVTTFSIDDEFLLGDALLVHPVTDSEAHGVQVYLPGQGEVWYDVHSYQKYHGPQTLYLPVTLSSIPVFQRGGTIVPRWMRVRRSSDCMKDDPITLFVALSPQGTAQGELFLDDGHTFNYQTGHEFLLRRFSFSGNTLVSSSADSKGHFETPVWIERVVIIGAGKPATVVLQTKGSPESRLSFQHDPETSVLILRKPGVNVASDWSIHLR.

The signal sequence occupies residues 1-32; sequence MAAVAAVAARRRRSWTGLVLACLGVCLGLTLA. A disulfide bridge connects residues Cys41 and Cys47. Ser52 carries the phosphoserine modification. Residue Asn97 is glycosylated (N-linked (GlcNAc...) asparagine). Positions 181–225 are disordered; that stretch reads QRAPRVSQGSKDPAEGDGAQPEEAPGDGDKPEEIQGKAEKDEPGA. A compositionally biased stretch (basic and acidic residues) spans 207–225; the sequence is DGDKPEEIQGKAEKDEPGA. Substrate contacts are provided by Asp283 and Asp429. Asp542 serves as the catalytic Nucleophile. Substrate is bound at residue Arg602. Catalysis depends on Asp618, which acts as the Proton donor. An intrachain disulfide couples Cys633 to Cys644. Residue His676 coordinates substrate.

Belongs to the glycosyl hydrolase 31 family. Heterodimer of a catalytic alpha subunit (GANAB) and a beta subunit (PRKCSH). Binds glycosylated PTPRC. Contains sialylated polysaccharide chains.

Its subcellular location is the endoplasmic reticulum. It localises to the golgi apparatus. The protein resides in the melanosome. It catalyses the reaction N(4)-(alpha-D-Glc-(1-&gt;3)-alpha-D-Man-(1-&gt;2)-alpha-D-Man-(1-&gt;2)-alpha-D-Man-(1-&gt;3)-[alpha-D-Man-(1-&gt;2)-alpha-D-Man-(1-&gt;3)-[alpha-D-Man-(1-&gt;2)-alpha-D-Man-(1-&gt;6)]-alpha-D-Man-(1-&gt;6)]-beta-D-Man-(1-&gt;4)-beta-D-GlcNAc-(1-&gt;4)-beta-D-GlcNAc)-L-asparaginyl-[protein] + H2O = N(4)-(alpha-D-Man-(1-&gt;2)-alpha-D-Man-(1-&gt;2)-alpha-D-Man-(1-&gt;3)-[alpha-D-Man-(1-&gt;2)-alpha-D-Man-(1-&gt;3)-[alpha-D-Man-(1-&gt;2)-alpha-D-Man-(1-&gt;6)]-alpha-D-Man-(1-&gt;6)]-beta-D-Man-(1-&gt;4)-beta-D-GlcNAc-(1-&gt;4)-beta-D-GlcNAc)-L-asparaginyl-[protein] (N-glucan mannose isomer 9A1,2,3B1,2,3) + beta-D-glucose. It carries out the reaction N(4)-(alpha-D-Glc-(1-&gt;3)-alpha-D-Glc-(1-&gt;3)-alpha-D-Man-(1-&gt;2)-alpha-D-Man-(1-&gt;2)-alpha-D-Man-(1-&gt;3)-[alpha-D-Man-(1-&gt;2)-alpha-D-Man-(1-&gt;3)-[alpha-D-Man-(1-&gt;2)-alpha-D-Man-(1-&gt;6)]-alpha-D-Man-(1-&gt;6)]-beta-D-Man-(1-&gt;4)-beta-D-GlcNAc-(1-&gt;4)-beta-D-GlcNAc)-L-asparaginyl-[protein] + H2O = N(4)-(alpha-D-Glc-(1-&gt;3)-alpha-D-Man-(1-&gt;2)-alpha-D-Man-(1-&gt;2)-alpha-D-Man-(1-&gt;3)-[alpha-D-Man-(1-&gt;2)-alpha-D-Man-(1-&gt;3)-[alpha-D-Man-(1-&gt;2)-alpha-D-Man-(1-&gt;6)]-alpha-D-Man-(1-&gt;6)]-beta-D-Man-(1-&gt;4)-beta-D-GlcNAc-(1-&gt;4)-beta-D-GlcNAc)-L-asparaginyl-[protein] + beta-D-glucose. It functions in the pathway glycan metabolism; N-glycan metabolism. Catalytic subunit of glucosidase II that cleaves sequentially the 2 innermost alpha-1,3-linked glucose residues from the Glc(2)Man(9)GlcNAc(2) oligosaccharide precursor of immature glycoproteins. Required for PKD1/Polycystin-1 and PKD2/Polycystin-2 maturation and localization to the cell surface and cilia. The polypeptide is Neutral alpha-glucosidase AB (GANAB) (Sus scrofa (Pig)).